Consider the following 407-residue polypeptide: B3 domain-containing protein Os07g0183200 (407 aa).

Residues 124–227 (FVKTLMISDF…ELYVGVRRQR (104 aa)) constitute a DNA-binding region (TF-B3).

It localises to the nucleus. The polypeptide is B3 domain-containing protein Os07g0183200 (Oryza sativa subsp. japonica (Rice)).